A 131-amino-acid chain; its full sequence is Profilin-8 (131 aa).

Cysteines 13 and 115 form a disulfide. The Involved in PIP2 interaction signature appears at 81 to 97 (AVIRGKKGSGGITVKKT). T111 bears the Phosphothreonine mark.

This sequence belongs to the profilin family. Occurs in many kinds of cells as a complex with monomeric actin in a 1:1 ratio. In terms of processing, phosphorylated by MAP kinases.

It localises to the cytoplasm. It is found in the cytoskeleton. Its function is as follows. Binds to actin and affects the structure of the cytoskeleton. At high concentrations, profilin prevents the polymerization of actin, whereas it enhances it at low concentrations. The protein is Profilin-8 of Zea mays (Maize).